The primary structure comprises 425 residues: Stabilizer of axonemal microtubules 4 (425 aa).

Disordered regions lie at residues 93 to 126, 203 to 225, and 316 to 335; these read PLEV…PPTK, EGSG…SQAL, and KEPT…PCDP. Residues 207–222 show a composition bias toward polar residues; sequence FTKQSHQSPIVFQPPS.

In terms of assembly, microtubule inner protein component of sperm flagellar doublet microtubules. Interacts with PPP1CA.

It localises to the cell projection. The protein resides in the cilium. Its subcellular location is the cytoplasm. The protein localises to the cytoskeleton. It is found in the flagellum axoneme. In Homo sapiens (Human), this protein is Stabilizer of axonemal microtubules 4.